A 642-amino-acid polypeptide reads, in one-letter code: Threonine--tRNA ligase (642 aa).

In terms of domain architecture, TGS spans 1-61 (MPVITLPDGS…ENDAQLSIIT (61 aa)). Residues 243 to 534 (DHRKIGKQLD…LTEEFAGFFP (292 aa)) are catalytic. Lys-286 carries the N6-acetyllysine modification. Zn(2+) is bound by residues Cys-334, His-385, and His-511.

It belongs to the class-II aminoacyl-tRNA synthetase family. In terms of assembly, homodimer. It depends on Zn(2+) as a cofactor.

The protein localises to the cytoplasm. It carries out the reaction tRNA(Thr) + L-threonine + ATP = L-threonyl-tRNA(Thr) + AMP + diphosphate + H(+). Catalyzes the attachment of threonine to tRNA(Thr) in a two-step reaction: L-threonine is first activated by ATP to form Thr-AMP and then transferred to the acceptor end of tRNA(Thr). Also edits incorrectly charged L-seryl-tRNA(Thr). This is Threonine--tRNA ligase from Shigella flexneri serotype 5b (strain 8401).